A 122-amino-acid chain; its full sequence is MHAPSQIRLTFNQDHPEPHEHEDEGAGLAVQESKPVLQPPPLYKVVLFNDDYTPMDFVVEVLEVFFNMDREKATKIMLTVHTQGKAVCGLFTRDVAETKAMQVNQYARESQHPLLCEIEKDS.

The disordered stretch occupies residues 1-33 (MHAPSQIRLTFNQDHPEPHEHEDEGAGLAVQES). Basic and acidic residues predominate over residues 14 to 24 (DHPEPHEHEDE).

The protein belongs to the ClpS family. In terms of assembly, binds to the N-terminal domain of the chaperone ClpA.

Functionally, involved in the modulation of the specificity of the ClpAP-mediated ATP-dependent protein degradation. This is ATP-dependent Clp protease adapter protein ClpS from Pseudomonas aeruginosa (strain ATCC 15692 / DSM 22644 / CIP 104116 / JCM 14847 / LMG 12228 / 1C / PRS 101 / PAO1).